Here is a 597-residue protein sequence, read N- to C-terminus: Probable methyltransferase-like protein 25 (597 aa).

Residues 245–254 (ECKGDAESVQ) are compositionally biased toward basic and acidic residues. Disordered regions lie at residues 245-265 (ECKG…DLSA) and 317-342 (TSSQ…KARD). The segment covering 317–326 (TSSQVQNTEK) has biased composition (polar residues).

Functionally, probable methyltransferase. The chain is Probable methyltransferase-like protein 25 (Mettl25) from Mus musculus (Mouse).